The sequence spans 209 residues: tRNA (guanine-N(7)-)-methyltransferase (209 aa).

Aspartate 35, glutamate 60, asparagine 87, and aspartate 113 together coordinate S-adenosyl-L-methionine. Aspartate 113 is an active-site residue. The substrate site is built by lysine 117 and aspartate 149.

It belongs to the class I-like SAM-binding methyltransferase superfamily. TrmB family.

It catalyses the reaction guanosine(46) in tRNA + S-adenosyl-L-methionine = N(7)-methylguanosine(46) in tRNA + S-adenosyl-L-homocysteine. Its pathway is tRNA modification; N(7)-methylguanine-tRNA biosynthesis. Catalyzes the formation of N(7)-methylguanine at position 46 (m7G46) in tRNA. The protein is tRNA (guanine-N(7)-)-methyltransferase of Prochlorococcus marinus subsp. pastoris (strain CCMP1986 / NIES-2087 / MED4).